The chain runs to 308 residues: MSKPRKKGRDINGIFLLDKSQGMSSNDIMQKVKRLFQANKAGHTGALDPLATGMLPICLGEATKFSQYLLDADKRYQVIAKLGERTDTSDADGQVVQKREVNIDLAKILTALEQFRGEIMQVPTMFSALKYQGKALYEYARAGITIEREARPISIFELKFIDYQIPYLTLEVHCSKGTYIRTLVDDLGEVLGCGAHVTRLRRIAVADYPYNKMMTLEQLQQFSEQEDLDLLDQHLLPMESAVIRLPGLHLTKEQARAVGFGQRIKFLNEQGIQGQVRLISPENLFLGVAVIDENSIVHPQRMVVIKPE.

The active-site Nucleophile is aspartate 48.

The protein belongs to the pseudouridine synthase TruB family. Type 1 subfamily.

The enzyme catalyses uridine(55) in tRNA = pseudouridine(55) in tRNA. Functionally, responsible for synthesis of pseudouridine from uracil-55 in the psi GC loop of transfer RNAs. The sequence is that of tRNA pseudouridine synthase B from Histophilus somni (strain 129Pt) (Haemophilus somnus).